A 347-amino-acid polypeptide reads, in one-letter code: Probable dual-specificity RNA methyltransferase RlmN (347 aa).

Glu93 functions as the Proton acceptor in the catalytic mechanism. The Radical SAM core domain occupies 99–333 (TEKRLTACLS…VSLRKSRGLD (235 aa)). A disulfide bridge links Cys106 with Cys338. [4Fe-4S] cluster is bound by residues Cys113, Cys117, and Cys120. Residues 160–161 (GE), Ser190, 219–221 (SLH), and Asn295 each bind S-adenosyl-L-methionine. The active-site S-methylcysteine intermediate is Cys338.

This sequence belongs to the radical SAM superfamily. RlmN family. [4Fe-4S] cluster serves as cofactor.

It is found in the cytoplasm. It catalyses the reaction adenosine(2503) in 23S rRNA + 2 reduced [2Fe-2S]-[ferredoxin] + 2 S-adenosyl-L-methionine = 2-methyladenosine(2503) in 23S rRNA + 5'-deoxyadenosine + L-methionine + 2 oxidized [2Fe-2S]-[ferredoxin] + S-adenosyl-L-homocysteine. The enzyme catalyses adenosine(37) in tRNA + 2 reduced [2Fe-2S]-[ferredoxin] + 2 S-adenosyl-L-methionine = 2-methyladenosine(37) in tRNA + 5'-deoxyadenosine + L-methionine + 2 oxidized [2Fe-2S]-[ferredoxin] + S-adenosyl-L-homocysteine. Functionally, specifically methylates position 2 of adenine 2503 in 23S rRNA and position 2 of adenine 37 in tRNAs. The polypeptide is Probable dual-specificity RNA methyltransferase RlmN (Prochlorococcus marinus (strain MIT 9301)).